Here is a 443-residue protein sequence, read N- to C-terminus: Amino-acid acetyltransferase (443 aa).

Residues 296 to 435 (EQIRRATIND…KEMYNYQRRS (140 aa)) enclose the N-acetyltransferase domain.

Belongs to the acetyltransferase family. ArgA subfamily. As to quaternary structure, homohexamer.

The protein resides in the cytoplasm. The enzyme catalyses L-glutamate + acetyl-CoA = N-acetyl-L-glutamate + CoA + H(+). The protein operates within amino-acid biosynthesis; L-arginine biosynthesis; N(2)-acetyl-L-ornithine from L-glutamate: step 1/4. This is Amino-acid acetyltransferase from Enterobacter sp. (strain 638).